A 368-amino-acid chain; its full sequence is Multifunctional CCA protein (368 aa).

The ATP site is built by Gly-8 and Arg-11. Residues Gly-8 and Arg-11 each contribute to the CTP site. Mg(2+)-binding residues include Asp-21 and Asp-23. Residues Arg-91, Arg-137, and Arg-140 each coordinate ATP. 3 residues coordinate CTP: Arg-91, Arg-137, and Arg-140.

The protein belongs to the tRNA nucleotidyltransferase/poly(A) polymerase family. Bacterial CCA-adding enzyme type 1 subfamily. Monomer. Can also form homodimers and oligomers. Requires Mg(2+) as cofactor. Ni(2+) is required as a cofactor.

It catalyses the reaction a tRNA precursor + 2 CTP + ATP = a tRNA with a 3' CCA end + 3 diphosphate. It carries out the reaction a tRNA with a 3' CCA end + 2 CTP + ATP = a tRNA with a 3' CCACCA end + 3 diphosphate. Functionally, catalyzes the addition and repair of the essential 3'-terminal CCA sequence in tRNAs without using a nucleic acid template. Adds these three nucleotides in the order of C, C, and A to the tRNA nucleotide-73, using CTP and ATP as substrates and producing inorganic pyrophosphate. tRNA 3'-terminal CCA addition is required both for tRNA processing and repair. Also involved in tRNA surveillance by mediating tandem CCA addition to generate a CCACCA at the 3' terminus of unstable tRNAs. While stable tRNAs receive only 3'-terminal CCA, unstable tRNAs are marked with CCACCA and rapidly degraded. The polypeptide is Multifunctional CCA protein (Pseudomonas putida (strain ATCC 47054 / DSM 6125 / CFBP 8728 / NCIMB 11950 / KT2440)).